Reading from the N-terminus, the 315-residue chain is Calumenin (315 aa).

Residues 1–19 form the signal peptide; the sequence is MDLRQFLMCLSLCTAFALS. At Ser-44 the chain carries Phosphoserine. Phosphotyrosine is present on Tyr-47. Thr-65 is modified (phosphothreonine). 6 EF-hand domains span residues 68-103, 104-139, 151-186, 188-223, 229-264, and 265-300; these read ESKE…AQKK, YIYD…TYLD, QMMV…EEYD, MKDI…HDGN, WVKT…SDYD, and HAEA…FVGS. A Phosphoserine modification is found at Ser-69. Residues Asp-81, Asp-83, Asp-85, Glu-92, Asp-117, Asn-119, Asp-121, and Glu-128 each coordinate Ca(2+). Residue Asn-131 is glycosylated (N-linked (GlcNAc...) asparagine). Position 164 (Asp-164) interacts with Ca(2+). Lys-165 carries the N6-acetyllysine modification. Asp-166, Asp-168, Glu-175, Asp-201, Asn-203, Asp-205, Glu-212, Asp-242, Asn-244, Asp-246, Lys-248, and Glu-253 together coordinate Ca(2+). Thr-254 carries the phosphothreonine modification. Residues Ser-261 and Ser-277 each carry the phosphoserine modification. Residues Asp-278, Asn-280, Asp-282, Lys-284, and Glu-289 each contribute to the Ca(2+) site. The short motif at 312–315 is the Prevents secretion from ER element; it reads HDEF.

It belongs to the CREC family. Interacts with GGCX.

The protein resides in the endoplasmic reticulum membrane. The protein localises to the golgi apparatus. It localises to the secreted. Its subcellular location is the melanosome. It is found in the sarcoplasmic reticulum lumen. In terms of biological role, involved in regulation of vitamin K-dependent carboxylation of multiple N-terminal glutamate residues. Seems to inhibit gamma-carboxylase GGCX. Binds 7 calcium ions with a low affinity. This Bos taurus (Bovine) protein is Calumenin (CALU).